A 291-amino-acid polypeptide reads, in one-letter code: Small ribosomal subunit protein uS2 (291 aa).

Residues 254-291 (RTSNRDNKNNKNNNNTDNTDNAASIKEEDLIGGSNNEN) form a disordered region. Low complexity predominate over residues 263–277 (NKNNNNTDNTDNAAS).

Belongs to the universal ribosomal protein uS2 family.

This Ehrlichia canis (strain Jake) protein is Small ribosomal subunit protein uS2.